We begin with the raw amino-acid sequence, 212 residues long: Adenylate kinase (212 aa).

10-15 (GAGKGT) serves as a coordination point for ATP. Positions 30–59 (AIGDIFRTIIKTSTSEAELINNYVRQGELI) are NMP. Residues Arg-36, 57 to 59 (ELI), 85 to 88 (GYPR), and Gln-92 contribute to the AMP site. Positions 122–160 (GRYSCKNCGKIYNRYFLQPKTDNVCDVCGSSTFDYRKDD) are LID. Arg-123 contributes to the ATP binding site. Zn(2+) contacts are provided by Cys-126 and Cys-129. Residue 132 to 133 (IY) coordinates ATP. Cys-146 and Cys-149 together coordinate Zn(2+). The AMP site is built by Arg-157 and Arg-168. ATP is bound at residue Lys-196.

The protein belongs to the adenylate kinase family. As to quaternary structure, monomer.

It is found in the cytoplasm. The catalysed reaction is AMP + ATP = 2 ADP. It functions in the pathway purine metabolism; AMP biosynthesis via salvage pathway; AMP from ADP: step 1/1. Catalyzes the reversible transfer of the terminal phosphate group between ATP and AMP. Plays an important role in cellular energy homeostasis and in adenine nucleotide metabolism. This chain is Adenylate kinase, found in Rickettsia rickettsii (strain Iowa).